Reading from the N-terminus, the 475-residue chain is Squamosa promoter-binding-like protein 12 (475 aa).

Positions Asn-49–Ser-73 are disordered. Positions Gly-51–Ser-73 are enriched in low complexity. The segment at Ser-177–Pro-254 adopts an SBP-type zinc-finger fold. The Zn(2+) site is built by Cys-180, Cys-185, Cys-202, His-205, Cys-221, Cys-224, His-228, and Cys-240. The Bipartite nuclear localization signal motif lies at Lys-237–Lys-253. The disordered stretch occupies residues Gly-437–His-475. Positions Asn-465–His-475 are enriched in polar residues.

As to expression, expressed in young panicles.

The protein resides in the nucleus. Functionally, trans-acting factor that binds specifically to the consensus nucleotide sequence 5'-TNCGTACAA-3'. May be involved in panicle development. The chain is Squamosa promoter-binding-like protein 12 (SPL12) from Oryza sativa subsp. indica (Rice).